Reading from the N-terminus, the 82-residue chain is uncharacterized protein (82 aa).

The segment at Y60–T82 is disordered.

This is an uncharacterized protein from Saccharomyces cerevisiae (strain ATCC 204508 / S288c) (Baker's yeast).